A 442-amino-acid chain; its full sequence is Syndecan-3 (442 aa).

Disordered regions lie at residues 1–25 (MKPG…GPGA) and 55–85 (RPVD…SGYF). A signal peptide spans 1–44 (MKPGPPRRGTAQGQRVDTATHGPGARGLLLPPLLLLLLAGRAAG). At 45–387 (AQRWRNENFE…SILERKEVLV (343 aa)) the chain is on the extracellular side. A compositionally biased stretch (acidic residues) spans 61–75 (GSGDDDSFPDDELDD). 4 O-linked (Xyl...) (glycosaminoglycan) serine glycosylation sites follow: Ser78, Ser80, Ser82, and Ser89. The O-linked (GalNAc) threonine; by GALNT13 glycan is linked to Thr107. Disordered stretches follow at residues 151–175 (EEPS…TGAP), 180–199 (APAT…PATA), 225–244 (ATTP…DTEA), 252–327 (TATS…TTQP), and 339–372 (AAAK…SSAA). Residues 157–175 (ATTISTTTSTTAATTTGAP) are compositionally biased toward low complexity. O-linked (GalNAc) serine; by GALNT13 glycosylation is present at Ser161. O-linked (GalNAc) threonine; by GALNT13 glycosylation is found at Thr162, Thr163, Thr170, and Thr172. Residues 276-287 (TLPLGTTAPGPT) show a composition bias toward low complexity. Over residues 289–303 (VAQTPTPESLLTTTQ) the composition is skewed to polar residues. O-linked (Xyl...) (glycosaminoglycan) serine glycosylation is found at Ser315 and Ser367. The helical transmembrane segment at 388–408 (AVIVGGVVGALFAAFLVTLLI) threads the bilayer. A phosphotyrosine mark is found at Tyr409, Tyr419, Tyr431, and Tyr441. Topologically, residues 409-442 (YRMKKKDEGSYTLEEPKQASVTYQKPDKQEEFYA) are cytoplasmic. Residues 419–442 (YTLEEPKQASVTYQKPDKQEEFYA) form a disordered region. Basic and acidic residues predominate over residues 433–442 (KPDKQEEFYA).

It belongs to the syndecan proteoglycan family. In terms of assembly, interacts with TIAM1. Interacts (via heparan sulfate chains) with PTN; this interaction mediates the neurite outgrowth-promoting signal from PTN to the cytoskeleton of growing neurites; this interaction mediates osteoblast recruitment. Interacts with MDK; this interaction induces SDC3 clustering; this interaction induces neuronal cell adhesion and neurite outgrowth. O-glycosylated within the Thr/Ser-rich region which could interact with lectin domains on other molecules. High levels in neonatal brain, heart, and Schwann cells, barely detectable in neonatal or adult liver, or adult brain.

Its subcellular location is the cell membrane. Cell surface proteoglycan that may bear heparan sulfate. May have a role in the organization of cell shape by affecting the actin cytoskeleton, possibly by transferring signals from the cell surface in a sugar-dependent mechanism. This is Syndecan-3 (Sdc3) from Rattus norvegicus (Rat).